The sequence spans 339 residues: DNA-directed RNA polymerase subunit alpha (339 aa).

The tract at residues 1–233 (MVREEVAGST…DLFLPFLHAE (233 aa)) is alpha N-terminal domain (alpha-NTD). The interval 264–339 (KKGIPLNCIF…IDLLKNKLSF (76 aa)) is alpha C-terminal domain (alpha-CTD).

Belongs to the RNA polymerase alpha chain family. In plastids the minimal PEP RNA polymerase catalytic core is composed of four subunits: alpha, beta, beta', and beta''. When a (nuclear-encoded) sigma factor is associated with the core the holoenzyme is formed, which can initiate transcription.

It is found in the plastid. Its subcellular location is the chloroplast. It catalyses the reaction RNA(n) + a ribonucleoside 5'-triphosphate = RNA(n+1) + diphosphate. Its function is as follows. DNA-dependent RNA polymerase catalyzes the transcription of DNA into RNA using the four ribonucleoside triphosphates as substrates. In Festucopsis serpentini, this protein is DNA-directed RNA polymerase subunit alpha.